Consider the following 227-residue polypeptide: PKHD-type hydroxylase Bphy_5374 (227 aa).

Positions K79–S179 constitute a Fe2OG dioxygenase domain. H97, D99, and H160 together coordinate Fe cation. R170 serves as a coordination point for 2-oxoglutarate.

Fe(2+) is required as a cofactor. The cofactor is L-ascorbate.

This chain is PKHD-type hydroxylase Bphy_5374, found in Paraburkholderia phymatum (strain DSM 17167 / CIP 108236 / LMG 21445 / STM815) (Burkholderia phymatum).